The sequence spans 170 residues: Photosystem II extrinsic protein V (170 aa).

The N-terminal stretch at 1 to 33 is a signal peptide; the sequence is MASLFASLGRSLIKLLIVLPVIIGLSISSPAMA. Heme c is bound by residues Cys70, Cys73, His74, and His125.

Belongs to the cytochrome c family. PsbV subfamily. As to quaternary structure, PSII is composed of 1 copy each of membrane proteins PsbA, PsbB, PsbC, PsbD, PsbE, PsbF, PsbH, PsbI, PsbJ, PsbK, PsbL, PsbM, PsbT, PsbX, PsbY, Psb30/Ycf12, peripheral proteins PsbO, CyanoQ (PsbQ), PsbU, PsbV and a large number of cofactors. It forms dimeric complexes. Requires heme c as cofactor.

The protein resides in the cellular thylakoid membrane. Functionally, one of the extrinsic, lumenal subunits of photosystem II (PSII). PSII is a light-driven water plastoquinone oxidoreductase, using light energy to abstract electrons from H(2)O, generating a proton gradient subsequently used for ATP formation. The extrinsic proteins stabilize the structure of photosystem II oxygen-evolving complex (OEC), the ion environment of oxygen evolution and protect the OEC against heat-induced inactivation. Low-potential cytochrome c that plays a role in the OEC of PSII. The protein is Photosystem II extrinsic protein V of Prochlorococcus marinus (strain MIT 9313).